Here is a 907-residue protein sequence, read N- to C-terminus: Epidermal growth factor receptor substrate 15-like 1 (907 aa).

Ala-2 is subject to N-acetylalanine. Residues 15–104 form the EH 1 domain; it reads GNPLYESYYK…SLTMPPPKFH (90 aa). An interaction with DAB2 region spans residues 15–368; it reads GNPLYESYYK…PSERGTPIPD (354 aa). Positions 48–83 constitute an EF-hand 1 domain; it reads LSDIILGKIWDLADPEGKGFLDKQGFYVALRLVACA. Tyr-74 carries the phosphotyrosine modification. Phosphoserine occurs at positions 107 and 108. Residues 127–215 enclose the EH 2 domain; the sequence is EKAKFDGIFE…PPLIPPSKRK (89 aa). In terms of domain architecture, EF-hand 2 spans 159 to 194; the sequence is LPLDVLGRVWDLSDIDKDGHLDRDEFAVAMHLVYRA. Positions 172, 174, 176, 178, and 183 each coordinate Ca(2+). Phosphoserine is present on residues Ser-229, Ser-244, Ser-253, Ser-255, and Ser-259. The disordered stretch occupies residues 229-260; it reads SPPPKDSLRSTPSHGSVSSLNSTGSLSPKHSV. Residues 241 to 255 show a composition bias toward low complexity; the sequence is SHGSVSSLNSTGSLS. EF-hand domains follow at residues 272–307 and 308–341; these read ADKM…SGLT and QNLL…IQQK. In terms of domain architecture, EH 3 spans 273-363; the sequence is DKMRFDEIFL…PDMVPPSERG (91 aa). Ser-360 bears the Phosphoserine mark. A Phosphothreonine modification is found at Thr-364. Residues Ser-369 and Ser-375 each carry the phosphoserine modification. A coiled-coil region spans residues 384–551; that stretch reads LDDISQEIAQ…RSKLSQLQES (168 aa). Residue Ser-558 is modified to Phosphoserine. The residue at position 562 (Tyr-562) is a Phosphotyrosine. At Ser-610 the chain carries Phosphoserine. A disordered region spans residues 611 to 860; it reads QELHPDPFQA…SSSGFADFTS (250 aa). Residues 622–636 show a composition bias toward basic and acidic residues; sequence DPFKSDPFKGADPFK. The span at 643 to 652 shows a compositional bias: polar residues; sequence DPFSEQQTAA. Phosphoserine is present on residues Ser-664, Ser-670, Ser-695, Ser-715, and Ser-732. Positions 682-696 are enriched in polar residues; it reads NDPFTSDPFTKNPSL. The span at 703–743 shows a compositional bias: low complexity; that stretch reads FESSDPFSSSSISSKGSDPFGTLDPFGSSSFSSAEGFADFS. Pro residues predominate over residues 776–790; the sequence is ALPPKKPAPPRPKPP. Position 791 is a phosphoserine (Ser-791). Residues 791-802 are compositionally biased toward polar residues; sequence SGQSTPVSQLGS. Thr-795 bears the Phosphothreonine mark. A compositionally biased stretch (low complexity) spans 840-853; it reads APSSSAKPPKTSSS. UIM domains are found at residues 863 to 882 and 889 to 907; these read NEEQ…EQER and QEQE…DMPA.

As to quaternary structure, interacts with EPS15, AGFG1/HRB and AGFG2/HRBL. Associates with the clathrin-associated adapter protein complex 2 (AP-2). Interacts with FCHO1. Interacts with FCHO2. Interacts (via EH domains) with DAB2. Interacts with UBQLN1 (via ubiquitin-like domain). Interacts with CAVIN3 (via leucine-zipper domain). Interacts with REPS2. Phosphorylated on tyrosine residues by EGFR.

Its subcellular location is the cell membrane. The protein localises to the nucleus. It is found in the membrane. It localises to the coated pit. Seems to be a constitutive component of clathrin-coated pits that is required for receptor-mediated endocytosis. Involved in endocytosis of integrin beta-1 (ITGB1) and transferrin receptor (TFR); internalization of ITGB1 as DAB2-dependent cargo but not TFR seems to require association with DAB2. The protein is Epidermal growth factor receptor substrate 15-like 1 (Eps15l1) of Mus musculus (Mouse).